A 214-amino-acid chain; its full sequence is Adenylate kinase (214 aa).

G10 to T15 lines the ATP pocket. An NMP region spans residues S30–V59. AMP contacts are provided by residues T31, R36, Q57–V59, G85–R88, and Q92. An LID region spans residues G122 to D159. ATP contacts are provided by residues R123 and V132–Y133. 2 residues coordinate AMP: R156 and R167. ATP is bound at residue Q200.

Belongs to the adenylate kinase family. In terms of assembly, monomer.

It localises to the cytoplasm. It carries out the reaction AMP + ATP = 2 ADP. It participates in purine metabolism; AMP biosynthesis via salvage pathway; AMP from ADP: step 1/1. In terms of biological role, catalyzes the reversible transfer of the terminal phosphate group between ATP and AMP. Plays an important role in cellular energy homeostasis and in adenine nucleotide metabolism. In Colwellia psychrerythraea (strain 34H / ATCC BAA-681) (Vibrio psychroerythus), this protein is Adenylate kinase.